Reading from the N-terminus, the 103-residue chain is Large ribosomal subunit protein bL21 (103 aa).

It belongs to the bacterial ribosomal protein bL21 family. Part of the 50S ribosomal subunit. Contacts protein L20.

In terms of biological role, this protein binds to 23S rRNA in the presence of protein L20. This is Large ribosomal subunit protein bL21 from Bordetella petrii (strain ATCC BAA-461 / DSM 12804 / CCUG 43448).